A 319-amino-acid polypeptide reads, in one-letter code: Olfactory receptor 10Q1 (319 aa).

The Extracellular portion of the chain corresponds to 1-29; it reads MPVGKLVFNQSEPTEFVFRAFTTATEFQV. Asn-9 is a glycosylation site (N-linked (GlcNAc...) asparagine). Residues 30–50 form a helical membrane-spanning segment; sequence LLFLLFLLLYLMILCGNTAII. The Cytoplasmic portion of the chain corresponds to 51-58; it reads WVVCTHST. A helical membrane pass occupies residues 59 to 79; sequence LRTPMYFFLSNLSFLELCYTT. At 80–103 the chain is on the extracellular side; it reads VVVPLMLSNILGAQKPISLAGCGA. Cys-101 and Cys-194 are joined by a disulfide. The helical transmembrane segment at 104–124 threads the bilayer; the sequence is QMFFFVTLGSTDCFLLAIMAY. The Cytoplasmic portion of the chain corresponds to 125–143; that stretch reads DRYVAICHPLHYTLIMTRE. Residues 144-164 form a helical membrane-spanning segment; it reads LCTQMLGGALGLALFPSLQLT. Over 165-202 the chain is Extracellular; sequence ALIFTLPFCGHHQEINHFLCDVPPVLRLACADIRVHQA. A helical membrane pass occupies residues 203 to 222; sequence VLYVVSILVLTIPFLLICVS. Topologically, residues 223-242 are cytoplasmic; the sequence is YVFITCAILSIRSAEGRRRA. Residues 243–263 traverse the membrane as a helical segment; the sequence is FSTCSFHLTVVLLQYGCCSLV. Over 264–276 the chain is Extracellular; the sequence is YLRPRSSTSEDED. A helical membrane pass occupies residues 277–297; the sequence is SQIALVYTFVTPLLNPLLYSL. Residues 298-319 lie on the Cytoplasmic side of the membrane; sequence RNKDVKGALRSAIIRKAASDAN.

This sequence belongs to the G-protein coupled receptor 1 family.

It is found in the cell membrane. Functionally, odorant receptor. This chain is Olfactory receptor 10Q1 (OR10Q1), found in Homo sapiens (Human).